The sequence spans 234 residues: MAKVAKRIKNIRKDVDFNQLYALNDAVSMVKERAVAKFDETIEISMNLGVDPRHADQMVRGVAHLPNGTGRNIRVAVFARGDKAEEAKAAGADIVGAEDLFESINGGVIDFDRCIATPDMMPLVGRLGKILGPRSLMPNPKVGTVTLDVAGAVKASKGGAVEFRVEKAGIVHAGIGKASFGVEKIVENIKAFASAVIKAKPQGAKGEYIKRVAVSSTMGVGVKVDPATVRSESV.

This sequence belongs to the universal ribosomal protein uL1 family. In terms of assembly, part of the 50S ribosomal subunit.

Binds directly to 23S rRNA. The L1 stalk is quite mobile in the ribosome, and is involved in E site tRNA release. In terms of biological role, protein L1 is also a translational repressor protein, it controls the translation of the L11 operon by binding to its mRNA. The sequence is that of Large ribosomal subunit protein uL1 from Bartonella tribocorum (strain CIP 105476 / IBS 506).